The primary structure comprises 384 residues: MPENYTPAAAATGTWTEEEIRHQPRAWIRSLTNIDALRSALNNFLEPLLRKENLRIILTGAGTSAFIGDIIAPWLASHTGKNFSAVPTTDLVTNPMDYLNPAHPLLLISFGRSGNSPESVAAVELANQFVPECYHLPITCNEAGALYQNAINSDNAFALLMPAETHDRGFAMTSSITTMMASCLAVFAPETINSQTFRDVADRCQAILTTLGDFSEGVFGYAPWKRIVYLGSGGLQGAARESALKVLELTAGKLAAFYDSPTGFRHGPKSLVDDETLVVVFVSSHPYTRQYDLDLLAELRRDNQAMRVIAIAAESSDIVAAGPHIILPPSRHFIDVEQAFCFLMYAQTFALMQSLHMGNTPDTPSASGTVNRVVQGVIIHPWQA.

SIS domains follow at residues 45–197 and 215–364; these read LEPL…SQTF and SEGV…PDTP.

This sequence belongs to the SIS family. AgaS subfamily.

It catalyses the reaction D-galactosamine 6-phosphate + H2O = D-tagatopyranose 1-phosphate + NH4(+). Functionally, catalyzes the isomerization-deamination of galactosamine 6-phosphate to form tagatofuranose 6-phosphate and ammonium ion. This is D-galactosamine-6-phosphate deaminase AgaS from Escherichia coli.